The chain runs to 252 residues: 4-formylbenzenesulfonate dehydrogenase TsaC1/TsaC2 (252 aa).

NAD(+) contacts are provided by residues 9–36 (IVTGGASGFGAAIARRLSQAGAAVLVAD) and Asp-62. Ser-142 is a binding site for substrate. Tyr-155 serves as the catalytic Proton acceptor. NAD(+) is bound at residue Lys-159.

This sequence belongs to the short-chain dehydrogenases/reductases (SDR) family. Homodimer.

It carries out the reaction 4-formylbenzenesulfonate + NAD(+) + H2O = 4-sulfobenzoate + NADH + 2 H(+). Involved in the toluene-4-sulfonate degradation pathway. Does not discriminate between the sulfonate and the carboxyl substituents and can also be involved in the p-toluenecarboxylate degradation pathway. The sequence is that of 4-formylbenzenesulfonate dehydrogenase TsaC1/TsaC2 (tsaC1) from Comamonas testosteroni (Pseudomonas testosteroni).